Here is a 558-residue protein sequence, read N- to C-terminus: Formate--tetrahydrofolate ligase (558 aa).

Position 66 to 73 (66 to 73 (TPAGEGKT)) interacts with ATP.

The protein belongs to the formate--tetrahydrofolate ligase family.

It carries out the reaction (6S)-5,6,7,8-tetrahydrofolate + formate + ATP = (6R)-10-formyltetrahydrofolate + ADP + phosphate. Its pathway is one-carbon metabolism; tetrahydrofolate interconversion. The sequence is that of Formate--tetrahydrofolate ligase from Neisseria meningitidis serogroup A / serotype 4A (strain DSM 15465 / Z2491).